Reading from the N-terminus, the 557-residue chain is MGNHKAALTKQVFTFASELYAYGVREVVISPGSRSTPLALAFEAHPNIKTWIHPDERSAAFFAVGLIKGSERPVAILCTSGTAAANYTPAIAESQISRIPLIVLTSDRPHELRSVGAPQAINQVNMFNNYVSYEFDMPIADDSKETINAIYYQMQIASQYLYGPHKGPIHFNLPFRDPLTPDLNATELLTSEMKILPHYQKSIDASALRHILNKKKGLIIVGDMQHQEVDQILTYSTIYDLPILADPLSHLRKFDHPNVICTYDLLFRSGLDLNVDFVIRVGKPVISKKLNQWLKKTDAFQILVQNNDKIDVFPIAPDISYEISANDFFRSLMEDTTINRVSWLEKWQRLEKKGRKEIKCYLEQATDESAFVGELIKKTSEKDALFISNSMPIRDVDNLLLNKNIDVYANRGANGIDGIVSTALGMAVHKRITLLIGDLSFYHDMNGLLMSKLNNIQMNIVLLNNDGGGIFSYLPQKESATDYFERLFGTPTGLDFEYTAKLYQFDFKRFNSVSEFKNATLLSETSTIYELITNREDNFKQHQILYQKLSEMIHGTL.

The protein belongs to the TPP enzyme family. MenD subfamily. As to quaternary structure, homodimer. It depends on Mg(2+) as a cofactor. Mn(2+) is required as a cofactor. The cofactor is thiamine diphosphate.

It catalyses the reaction isochorismate + 2-oxoglutarate + H(+) = 5-enolpyruvoyl-6-hydroxy-2-succinyl-cyclohex-3-ene-1-carboxylate + CO2. The protein operates within quinol/quinone metabolism; 1,4-dihydroxy-2-naphthoate biosynthesis; 1,4-dihydroxy-2-naphthoate from chorismate: step 2/7. Its pathway is quinol/quinone metabolism; menaquinone biosynthesis. Its function is as follows. Catalyzes the thiamine diphosphate-dependent decarboxylation of 2-oxoglutarate and the subsequent addition of the resulting succinic semialdehyde-thiamine pyrophosphate anion to isochorismate to yield 2-succinyl-5-enolpyruvyl-6-hydroxy-3-cyclohexene-1-carboxylate (SEPHCHC). The chain is 2-succinyl-5-enolpyruvyl-6-hydroxy-3-cyclohexene-1-carboxylate synthase from Staphylococcus aureus (strain MSSA476).